Here is a 292-residue protein sequence, read N- to C-terminus: Shikimate dehydrogenase (NADP(+)) (292 aa).

Shikimate is bound by residues 25 to 27 (SKS) and Thr72. The active-site Proton acceptor is the Lys76. 2 residues coordinate shikimate: Asn97 and Asp113. NADP(+) contacts are provided by residues 137–141 (GAGGA), 161–166 (NRTQSK), and Met230. Tyr232 is a shikimate binding site. Gly254 contacts NADP(+).

It belongs to the shikimate dehydrogenase family. Homodimer.

It catalyses the reaction shikimate + NADP(+) = 3-dehydroshikimate + NADPH + H(+). Its pathway is metabolic intermediate biosynthesis; chorismate biosynthesis; chorismate from D-erythrose 4-phosphate and phosphoenolpyruvate: step 4/7. Functionally, involved in the biosynthesis of the chorismate, which leads to the biosynthesis of aromatic amino acids. Catalyzes the reversible NADPH linked reduction of 3-dehydroshikimate (DHSA) to yield shikimate (SA). The protein is Shikimate dehydrogenase (NADP(+)) of Shewanella sp. (strain MR-4).